We begin with the raw amino-acid sequence, 122 residues long: Probable DNA-directed RNA polymerase II subunit RPB11 (122 aa).

Belongs to the archaeal Rpo11/eukaryotic RPB11/RPC19 RNA polymerase subunit family. As to quaternary structure, component of the RNA polymerase II (Pol II) complex consisting of 12 subunits.

It is found in the nucleus. Functionally, DNA-dependent RNA polymerase catalyzes the transcription of DNA into RNA using the four ribonucleoside triphosphates as substrates. Component of RNA polymerase II which synthesizes mRNA precursors and many functional non-coding RNAs. Pol II is the central component of the basal RNA polymerase II transcription machinery. It is composed of mobile elements that move relative to each other. RPB11 is part of the core element with the central large cleft. The polypeptide is Probable DNA-directed RNA polymerase II subunit RPB11 (rpb-11) (Caenorhabditis briggsae).